Here is a 502-residue protein sequence, read N- to C-terminus: Hexose transporter 1 (502 aa).

Over 1–26 (MKKSSKEISSSQSLKNGGSDHFFNTS) the chain is Cytoplasmic. A helical transmembrane segment spans residues 27 to 47 (LMYVLAACLASFIFGYQVSVL). The Extracellular portion of the chain corresponds to 48–76 (NTIKNFIVIEFGWCTGNKVECDDSTLKSS). Cys-61 and Cys-68 are disulfide-bonded. Residues 77–97 (FLLASVFIGAVVGSGFSGYLV) traverse the membrane as a helical segment. Residues 98 to 102 (QHGRR) are Cytoplasmic-facing. The helical transmembrane segment at 103–123 (FSLLVIYNFFILVSILTSITH) threads the bilayer. The Extracellular segment spans residues 124-132 (HFHTILFSR). A helical membrane pass occupies residues 133–153 (LLSGFGIGLITVSVPMYISEM). The Cytoplasmic portion of the chain corresponds to 154-163 (THKDKKGAYG). The helical transmembrane segment at 164–184 (VLHQLFITFGIFVAVLLGMAM) threads the bilayer. Residue Gln-167 participates in alpha-D-glucose binding. Gln-167 provides a ligand contact to beta-D-glucose. The Extracellular segment spans residues 185–205 (GEAPDAKSVDALGEFQKIWWR). Residues 206 to 226 (LMFFFPCLISILGIVLLTFFY) traverse the membrane as a helical segment. The Cytoplasmic portion of the chain corresponds to 227–291 (KEETPYYLFE…RAMQIPSYRN (65 aa)). The helical transmembrane segment at 292–312 (VILLGCILSGLQQFTGINVLV) threads the bilayer. Residues Gln-303, Gln-304, and Asn-309 each contribute to the alpha-D-glucose site. Beta-D-glucose is bound at residue Gln-303. Position 309 (Asn-309) interacts with beta-D-glucose. Residues 313–329 (SNSNELYKEFLSNKLIT) lie on the Extracellular side of the membrane. Residues 330-350 (TLSVIMTVVNFLMTFPAIYIV) form a helical membrane-spanning segment. Beta-D-glucose is bound at residue Asn-339. At 351-356 (EKLGRK) the chain is on the cytoplasmic side. The helical transmembrane segment at 357 to 377 (TLLLCGCAGVICAFLPTAIAN) threads the bilayer. The Extracellular portion of the chain corresponds to 378-390 (QIDSTSAFVKNLS). The chain crosses the membrane as a helical span at residues 391-411 (IAATFVMIISFAVSYGPVLWI). Residue Trp-410 participates in alpha-D-glucose binding. The Cytoplasmic portion of the chain corresponds to 412–427 (YLHEMFPSEIKDSAAS). Residues 428-448 (LASLVNWVCAIIVVFPSDIII) traverse the membrane as a helical segment. Over 449–453 (KKSPT) the chain is Extracellular. Residues 454–474 (ILFFIFSGMSILSFLFIFFFI) traverse the membrane as a helical segment. Residues 475 to 502 (KETKGGEIGTSPYITMEERQKHMGKSAV) lie on the Cytoplasmic side of the membrane.

It belongs to the major facilitator superfamily. Sugar transporter (TC 2.A.1.1) family. As to quaternary structure, homodimer.

It is found in the cell membrane. The catalysed reaction is D-glucose(out) = D-glucose(in). It carries out the reaction D-fructose(out) = D-fructose(in). The enzyme catalyses D-galactose(in) = D-galactose(out). It catalyses the reaction D-mannose(out) = D-mannose(in). The catalysed reaction is D-glucosamine(out) = D-glucosamine(in). It carries out the reaction D-xylose(out) = D-xylose(in). Inhibited by compound 3361 (3-O-((undec-10-en)-1-yl)-D-glucose). Functionally, sodium-independent facilitative hexose transporter. Can transport D-glucose and D-fructose. Can transport D-mannose, D-galactose, D-xylose and D-glucosamine. This is Hexose transporter 1 from Plasmodium vivax (strain Brazil I).